A 632-amino-acid polypeptide reads, in one-letter code: Dihydrolipoyllysine-residue acetyltransferase component of pyruvate dehydrogenase complex, mitochondrial (632 aa).

The N-terminal 77 residues, 1-77, are a transit peptide targeting the mitochondrion; sequence MWRVCARRVQ…LLGSPSRRSY (77 aa). 2 Lipoyl-binding domains span residues 82–158 and 208–284; these read HQKV…CITV and HMQI…CIIV. Phosphoserine is present on Ser-91. An N6-lipoyllysine mark is found at Lys-123 and Lys-249. Positions 342-379 constitute a Peripheral subunit-binding (PSBD) domain; that stretch reads FVSPLAKKLAAEKGIDLTQVKGTGPEGRIIKKDIDSFV. Arg-446 is a binding site for CoA. An N6-acetyllysine modification is found at Lys-451. The residue at position 458 (Lys-458) is an N6-succinyllysine. Ser-460 serves as a coordination point for CoA. At Lys-532 the chain carries N6-succinyllysine. Residues Ser-551, Asn-552, and Gly-576 each contribute to the CoA site. Residues His-605 and Asp-609 contribute to the active site.

Belongs to the 2-oxoacid dehydrogenase family. In terms of assembly, part of the pyruvate dehydrogenase complex (PDHc) that is a multi-enzyme complex composed of multiple copies of three enzymes, pyruvate dehydrogenase (subunits PDH1A and PDHB, E1 component), dihydrolipoamide acetyltransferase (DLAT, E2 component), and dihydrolipoamide dehydrogenase (DLD, E3 component) to which is added an additional protein the E3-binding protein (PDHX, E3BP). In terms of structural architecture, the E2 and E3BP components assemble into a 60meric central core with icosahedral symmetry. The central core is decorated with E1 and E3 proteins. Currently, two alternative models for the E2:E3BP stoichiometry are considered as being either 48:12 (E2(48)-E3BP(12)) or 40:20 (E2(40)-E3BP(20)). Interacts with PDK2 and PDK3. Interacts with SIRT4. Interacts with PDHB. The cofactor is (R)-lipoate. Delipoylated at Lys-123 and Lys-249 by SIRT4, delipoylation decreases the PHD complex activity. In terms of tissue distribution, expressed in flagella of epididymal sperm.

The protein localises to the mitochondrion matrix. The catalysed reaction is N(6)-[(R)-dihydrolipoyl]-L-lysyl-[protein] + acetyl-CoA = N(6)-[(R)-S(8)-acetyldihydrolipoyl]-L-lysyl-[protein] + CoA. Functionally, as part of the pyruvate dehydrogenase complex, catalyzes the transfers of an acetyl group to a lipoic acid moiety. The pyruvate dehydrogenase complex, catalyzes the overall conversion of pyruvate to acetyl-CoA and CO(2), and thereby links cytoplasmic glycolysis and the mitochondrial tricarboxylic acid (TCA) cycle. The protein is Dihydrolipoyllysine-residue acetyltransferase component of pyruvate dehydrogenase complex, mitochondrial of Rattus norvegicus (Rat).